The sequence spans 481 residues: Glutamine synthetase (481 aa).

The region spanning 22–106 (NEVEFVDFRF…VFCDVYDVYK (85 aa)) is the GS beta-grasp domain. A GS catalytic domain is found at 114–481 (PRSIAKKALK…PFEFITTYSC (368 aa)). Positions 139, 141, 223, and 230 each coordinate Mg(2+). L-glutamate-binding positions include 274–275 (NG) and glycine 275. Position 279 (histidine 279) interacts with Mg(2+). ATP is bound by residues 281-283 (HVS) and serine 283. 3 residues coordinate L-glutamate: arginine 331, glutamate 337, and arginine 349. ATP is bound by residues arginine 349 and arginine 354. Glutamate 367 is a Mg(2+) binding site. Arginine 369 contributes to the L-glutamate binding site.

This sequence belongs to the glutamine synthetase family. As to quaternary structure, oligomer of 12 subunits arranged in the form of two hexameric ring. It depends on Mg(2+) as a cofactor.

The protein resides in the cytoplasm. It carries out the reaction L-glutamate + NH4(+) + ATP = L-glutamine + ADP + phosphate + H(+). With respect to regulation, the activity of this enzyme could be controlled by adenylation under conditions of abundant glutamine. Functionally, catalyzes the ATP-dependent biosynthesis of glutamine from glutamate and ammonia. This chain is Glutamine synthetase, found in Helicobacter pylori (strain J99 / ATCC 700824) (Campylobacter pylori J99).